A 559-amino-acid polypeptide reads, in one-letter code: Dihydroxy-acid dehydratase 2 (559 aa).

Position 53 (Cys-53) interacts with [2Fe-2S] cluster. Residue Asp-85 coordinates Mg(2+). [2Fe-2S] cluster is bound at residue Cys-126. The Mg(2+) site is built by Asp-127 and Lys-128. Residue Lys-128 is modified to N6-carboxylysine. Cys-195 serves as a coordination point for [2Fe-2S] cluster. Position 446 (Glu-446) interacts with Mg(2+). Residue Ser-472 is the Proton acceptor of the active site.

The protein belongs to the IlvD/Edd family. Homodimer. [2Fe-2S] cluster is required as a cofactor. The cofactor is Mg(2+).

It carries out the reaction (2R)-2,3-dihydroxy-3-methylbutanoate = 3-methyl-2-oxobutanoate + H2O. The enzyme catalyses (2R,3R)-2,3-dihydroxy-3-methylpentanoate = (S)-3-methyl-2-oxopentanoate + H2O. Its pathway is amino-acid biosynthesis; L-isoleucine biosynthesis; L-isoleucine from 2-oxobutanoate: step 3/4. The protein operates within amino-acid biosynthesis; L-valine biosynthesis; L-valine from pyruvate: step 3/4. Functions in the biosynthesis of branched-chain amino acids. Catalyzes the dehydration of (2R,3R)-2,3-dihydroxy-3-methylpentanoate (2,3-dihydroxy-3-methylvalerate) into 2-oxo-3-methylpentanoate (2-oxo-3-methylvalerate) and of (2R)-2,3-dihydroxy-3-methylbutanoate (2,3-dihydroxyisovalerate) into 2-oxo-3-methylbutanoate (2-oxoisovalerate), the penultimate precursor to L-isoleucine and L-valine, respectively. This Pseudoalteromonas translucida (strain TAC 125) protein is Dihydroxy-acid dehydratase 2.